A 504-amino-acid chain; its full sequence is Protein phosphatase 1J (504 aa).

2 disordered regions span residues 1–102 (MLNR…RLPW) and 194–217 (PLCL…SPQS). A compositionally biased stretch (low complexity) spans 14 to 23 (SSSGTSSQRS). Thr-41 carries the post-translational modification Phosphothreonine. Over residues 59 to 73 (TAETPVSFSRPTFLQ) the composition is skewed to polar residues. Phosphoserine is present on residues Ser-65 and Ser-75. In terms of domain architecture, PPM-type phosphatase spans 103–496 (STGYAEVINA…DDISVFVIPL (394 aa)). Low complexity predominate over residues 197–217 (LPSTPGTPGVSSPSQLVSPQS).

This sequence belongs to the PP2C family. In terms of assembly, interacts with UBE2I/UBC9.

It catalyses the reaction O-phospho-L-seryl-[protein] + H2O = L-seryl-[protein] + phosphate. The catalysed reaction is O-phospho-L-threonyl-[protein] + H2O = L-threonyl-[protein] + phosphate. The sequence is that of Protein phosphatase 1J (Ppm1j) from Rattus norvegicus (Rat).